Consider the following 546-residue polypeptide: Phenylalanine--tRNA ligase beta subunit (546 aa).

A B5 domain is found at 266-342; the sequence is LAPAERVVSV…IAYGIENFDA (77 aa). Mg(2+) contacts are provided by D320, D326, E329, and D330.

The protein belongs to the phenylalanyl-tRNA synthetase beta subunit family. Type 2 subfamily. Tetramer of two alpha and two beta subunits. The cofactor is Mg(2+).

Its subcellular location is the cytoplasm. The catalysed reaction is tRNA(Phe) + L-phenylalanine + ATP = L-phenylalanyl-tRNA(Phe) + AMP + diphosphate + H(+). The polypeptide is Phenylalanine--tRNA ligase beta subunit (Methanoculleus marisnigri (strain ATCC 35101 / DSM 1498 / JR1)).